The chain runs to 99 residues: Small ribosomal subunit protein eS24 (99 aa).

This sequence belongs to the eukaryotic ribosomal protein eS24 family.

This Pyrococcus horikoshii (strain ATCC 700860 / DSM 12428 / JCM 9974 / NBRC 100139 / OT-3) protein is Small ribosomal subunit protein eS24.